Here is a 587-residue protein sequence, read N- to C-terminus: Glutamine--tRNA ligase (587 aa).

The 'HIGH' region signature appears at proline 58 to histidine 68. ATP is bound by residues glutamate 59–asparagine 61 and histidine 65–serine 71. L-glutamine is bound by residues aspartate 91 and tyrosine 240. Residues threonine 259 and arginine 294–leucine 295 contribute to the ATP site. Positions valine 301–arginine 305 match the 'KMSKS' region motif.

Belongs to the class-I aminoacyl-tRNA synthetase family. As to quaternary structure, monomer.

The protein resides in the cytoplasm. It catalyses the reaction tRNA(Gln) + L-glutamine + ATP = L-glutaminyl-tRNA(Gln) + AMP + diphosphate. The chain is Glutamine--tRNA ligase from Bordetella parapertussis (strain 12822 / ATCC BAA-587 / NCTC 13253).